The chain runs to 1755 residues: Transposon Ty1-LR3 Gag-Pol polyprotein (1755 aa).

Over residues Met-1–Ser-16 the composition is skewed to low complexity. Disordered stretches follow at residues Met-1–Gln-93, Pro-126–Pro-173, and Gly-352–Thr-421. Polar residues-rich tracts occupy residues Thr-48–Ser-60 and Gln-127–Phe-152. The segment covering Thr-153–Thr-165 has biased composition (low complexity). Residues Asn-299–His-401 are RNA-binding. Low complexity predominate over residues Asn-402 to Ser-418. Residue Ser-416 is modified to Phosphoserine. The active-site For protease activity; shared with dimeric partner is Asp-461. An integrase-type zinc finger-like region spans residues Asn-583–Cys-640. In terms of domain architecture, Integrase catalytic spans Asn-660–Asp-829. Positions 671 and 736 each coordinate Mg(2+). 3 disordered regions span residues Ser-956–Lys-1087, Arg-1092–Pro-1111, and Ala-1129–Tyr-1172. The span at Ser-960–Thr-969 shows a compositional bias: low complexity. Residues Ser-1005 to Thr-1015 show a composition bias toward polar residues. A compositionally biased stretch (basic and acidic residues) spans Glu-1038–Asp-1052. 2 stretches are compositionally biased toward polar residues: residues Ser-1053–Asp-1082 and Pro-1101–Pro-1111. A Bipartite nuclear localization signal motif is present at residues Lys-1178 to Arg-1212. A Reverse transcriptase Ty1/copia-type domain is found at Asn-1338–Gln-1476. The Mg(2+) site is built by Asp-1346, Asp-1427, Asp-1428, Asp-1610, Glu-1652, and Asp-1685. The 143-residue stretch at Asp-1610–Lys-1752 folds into the RNase H Ty1/copia-type domain.

In terms of assembly, the capsid protein forms a homotrimer, from which the VLPs are assembled. The protease is a homodimer, whose active site consists of two apposed aspartic acid residues. In terms of processing, initially, virus-like particles (VLPs) are composed of the structural unprocessed proteins Gag and Gag-Pol, and also contain the host initiator methionine tRNA (tRNA(i)-Met) which serves as a primer for minus-strand DNA synthesis, and a dimer of genomic Ty RNA. Processing of the polyproteins occurs within the particle and proceeds by an ordered pathway, called maturation. First, the protease (PR) is released by autocatalytic cleavage of the Gag-Pol polyprotein yielding capsid protein p45 and a Pol-p154 precursor protein. This cleavage is a prerequisite for subsequent processing of Pol-p154 at the remaining sites to release the mature structural and catalytic proteins. Maturation takes place prior to the RT reaction and is required to produce transposition-competent VLPs.

It localises to the cytoplasm. The protein localises to the nucleus. The enzyme catalyses DNA(n) + a 2'-deoxyribonucleoside 5'-triphosphate = DNA(n+1) + diphosphate. It catalyses the reaction Endonucleolytic cleavage to 5'-phosphomonoester.. In terms of biological role, capsid protein (CA) is the structural component of the virus-like particle (VLP), forming the shell that encapsulates the retrotransposons dimeric RNA genome. The particles are assembled from trimer-clustered units and there are holes in the capsid shells that allow for the diffusion of macromolecules. CA also has nucleocapsid-like chaperone activity, promoting primer tRNA(i)-Met annealing to the multipartite primer-binding site (PBS), dimerization of Ty1 RNA and initiation of reverse transcription. Its function is as follows. The aspartyl protease (PR) mediates the proteolytic cleavages of the Gag and Gag-Pol polyproteins after assembly of the VLP. Functionally, reverse transcriptase/ribonuclease H (RT) is a multifunctional enzyme that catalyzes the conversion of the retro-elements RNA genome into dsDNA within the VLP. The enzyme displays a DNA polymerase activity that can copy either DNA or RNA templates, and a ribonuclease H (RNase H) activity that cleaves the RNA strand of RNA-DNA heteroduplexes during plus-strand synthesis and hydrolyzes RNA primers. The conversion leads to a linear dsDNA copy of the retrotransposon that includes long terminal repeats (LTRs) at both ends. Integrase (IN) targets the VLP to the nucleus, where a subparticle preintegration complex (PIC) containing at least integrase and the newly synthesized dsDNA copy of the retrotransposon must transit the nuclear membrane. Once in the nucleus, integrase performs the integration of the dsDNA into the host genome. The polypeptide is Transposon Ty1-LR3 Gag-Pol polyprotein (TY1B-LR3) (Saccharomyces cerevisiae (strain ATCC 204508 / S288c) (Baker's yeast)).